A 354-amino-acid chain; its full sequence is Chorismate synthase (354 aa).

Arg-48 serves as a coordination point for NADP(+). FMN contacts are provided by residues 126–128 (RAS), Ala-278, 293–297 (KPIPS), and Arg-319.

The protein belongs to the chorismate synthase family. Homotetramer. FMNH2 serves as cofactor.

It carries out the reaction 5-O-(1-carboxyvinyl)-3-phosphoshikimate = chorismate + phosphate. The protein operates within metabolic intermediate biosynthesis; chorismate biosynthesis; chorismate from D-erythrose 4-phosphate and phosphoenolpyruvate: step 7/7. Functionally, catalyzes the anti-1,4-elimination of the C-3 phosphate and the C-6 proR hydrogen from 5-enolpyruvylshikimate-3-phosphate (EPSP) to yield chorismate, which is the branch point compound that serves as the starting substrate for the three terminal pathways of aromatic amino acid biosynthesis. This reaction introduces a second double bond into the aromatic ring system. This chain is Chorismate synthase, found in Desulfosudis oleivorans (strain DSM 6200 / JCM 39069 / Hxd3) (Desulfococcus oleovorans).